A 504-amino-acid chain; its full sequence is Probable ergothioneine transporter EgtUBC (504 aa).

One can recognise an ABC transmembrane type-1 domain in the interval Leu19–Leu198. Transmembrane regions (helical) follow at residues Ile25 to Leu44, Val57 to Ile74, Ile81 to Leu97, Met146 to Leu170, Leu179 to Leu198, and Ile210 to Phe229. The interval Ser231–Lys504 is ergothioneine binding domain.

This sequence in the N-terminal section; belongs to the binding-protein-dependent transport system permease family. The protein in the C-terminal section; belongs to the OsmX family. As to quaternary structure, the complex is probably composed of at least an ATP-binding protein (EgtUA) and a transmembrane protein (EgtUBC).

The protein localises to the membrane. Part of an ABC transporter complex EgtU required for the uptake of ergothioneine (EGT), a natural low-molecular weight (LMW) thiol antioxidant. Responsible for the translocation of the substrate across the membrane. Also contains a C-terminal periplasmic solute-binding domain (SBD) which binds to EGT with sub-micromolar affinity. Does not bind glycine betaine, carnitine, choline, proline, or cholate. Plays a role in bile acid tolerance. Dispensable for choline uptake. Probably not involved in betaine, carnitine or choline mediated osmo- or chill tolerance. Plays a role in enhancing virulence in mice. In Listeria monocytogenes serovar 1/2a (strain ATCC BAA-679 / EGD-e), this protein is Probable ergothioneine transporter EgtUBC.